The chain runs to 159 residues: Large ribosomal subunit protein uL30 (159 aa).

Belongs to the universal ribosomal protein uL30 family. As to quaternary structure, part of the 50S ribosomal subunit.

The sequence is that of Large ribosomal subunit protein uL30 from Aeropyrum pernix (strain ATCC 700893 / DSM 11879 / JCM 9820 / NBRC 100138 / K1).